A 557-amino-acid chain; its full sequence is Potassium-transporting ATPase potassium-binding subunit (557 aa).

Transmembrane regions (helical) follow at residues 5–25, 63–83, 132–152, 170–190, 253–273, 283–303, 329–349, 356–376, 379–399, 416–436, 484–504, and 526–546; these read GFLLIATFLLVLMVLARPLGS, LSAILGLNILGLAVLFFMLLG, GLTVQNFLSAASGIAVIFALI, LLRITLWVLTPVALLIALFFI, FVQMLAIFLIPTALCFAFGEV, LLWAMSVIFVICVGVVMWAEV, VLVSSLFAVVTTAASCGAVIA, ALGGMVPMWLMQIGEVVFGGV, GLYGMMLFVLLAVFIAGLMIG, LTALAILVTPTLVLMGAALAM, LLALCMFVGRFGVIIPVMAIA, and LFVGLLIGTVLLVGALTFIPA.

It belongs to the KdpA family. As to quaternary structure, the system is composed of three essential subunits: KdpA, KdpB and KdpC.

It is found in the cell inner membrane. Part of the high-affinity ATP-driven potassium transport (or Kdp) system, which catalyzes the hydrolysis of ATP coupled with the electrogenic transport of potassium into the cytoplasm. This subunit binds the periplasmic potassium ions and delivers the ions to the membrane domain of KdpB through an intramembrane tunnel. This chain is Potassium-transporting ATPase potassium-binding subunit, found in Escherichia coli O6:K15:H31 (strain 536 / UPEC).